Consider the following 180-residue polypeptide: Major urinary protein 5 (180 aa).

Residues 1–18 (MKLLLLLCLELTLVYVHA) form the signal peptide. Cysteines 82 and 175 form a disulfide.

This sequence belongs to the calycin superfamily. Lipocalin family.

Its subcellular location is the secreted. Its function is as follows. Major urinary proteins (Mups) bind pheromones, and thus stabilize them to allow slow release into the air from urine marks. May protect pheromones from oxidation. May also act as pheromones themselves. In this context, they play a role in the regulation of social behaviors, such as aggression, mating, pup-suckling, territory establishment and dominance. This chain is Major urinary protein 5, found in Mus musculus (Mouse).